The primary structure comprises 269 residues: Myelin protein zero-like protein 1 (269 aa).

The N-terminal stretch at 1–35 (MAAPAGAGALIASPDRRRCLWSVLAAALGLLTYGV) is a signal peptide. The region spanning 36-146 (SALEVYTPKE…VKNPPDIVVQ (111 aa)) is the Ig-like V-type domain. At 36 to 162 (SALEVYTPKE…YVVEKEILPA (127 aa)) the chain is on the extracellular side. Residues Asn50, Asn64, and Asn130 are each glycosylated (N-linked (GlcNAc...) asparagine). Cys58 and Cys135 are disulfide-bonded. The chain crosses the membrane as a helical span at residues 163-183 (FPVWVVVGIVTAVVLGLTLLI). Topologically, residues 184 to 269 (TMILAVIYRR…SVVYADIRKN (86 aa)) are cytoplasmic. Residues 202-238 (GCNTSENVSPVKQVSRKSPSDTEGLVKSLPSGSHQGP) are disordered. Residues 203 to 213 (CNTSENVSPVK) are compositionally biased toward polar residues. Ser206, Ser210, Ser219, and Ser221 each carry phosphoserine. Positions 239–244 (VIYAQL) match the ITIM motif 1 motif. Phosphotyrosine is present on Tyr241. Position 260 is a phosphoserine (Ser260). The ITIM motif 2 signature appears at 261–266 (VVYADI). At Tyr263 the chain carries Phosphotyrosine.

This sequence belongs to the myelin P0 protein family. Interacts with phosphorylated PTPN11/SHP-2. Phosphorylated on tyrosine residues upon stimulation with pervanadate and concanavalin-A (ConA). Phosphorylation at Tyr-241 and Tyr-263 is required for interaction with PTPN11/SHP-2. Dephosphorylated by PTPN11/SHP-2 (in vitro). In terms of processing, N-glycosylated.

It is found in the membrane. In terms of biological role, cell surface receptor, which is involved in signal transduction processes. Recruits PTPN11/SHP-2 to the cell membrane and is a putative substrate of PTPN11/SHP-2. Is a major receptor for concanavalin-A (ConA) and is involved in cellular signaling induced by ConA, which probably includes Src family tyrosine-protein kinases. May be involved in regulation of integrin-mediated cell motility. The chain is Myelin protein zero-like protein 1 (MPZL1) from Bos taurus (Bovine).